The following is a 459-amino-acid chain: Diaminopimelate decarboxylase (459 aa).

K89 is subject to N6-(pyridoxal phosphate)lysine. Pyridoxal 5'-phosphate-binding positions include G271 and 313–316 (EPGR). Residues R316, R357, and Y361 each contribute to the substrate site. The active-site Proton donor is the C388. Residues E389 and Y418 each contribute to the substrate site. Y418 contributes to the pyridoxal 5'-phosphate binding site.

The protein belongs to the Orn/Lys/Arg decarboxylase class-II family. LysA subfamily. Homodimer. Pyridoxal 5'-phosphate is required as a cofactor.

The catalysed reaction is meso-2,6-diaminopimelate + H(+) = L-lysine + CO2. It participates in amino-acid biosynthesis; L-lysine biosynthesis via DAP pathway; L-lysine from DL-2,6-diaminopimelate: step 1/1. Functionally, specifically catalyzes the decarboxylation of meso-diaminopimelate (meso-DAP) to L-lysine. This is Diaminopimelate decarboxylase from Corynebacterium efficiens (strain DSM 44549 / YS-314 / AJ 12310 / JCM 11189 / NBRC 100395).